The chain runs to 417 residues: UPF0597 protein FMG_0209 (417 aa).

The protein belongs to the UPF0597 family.

The polypeptide is UPF0597 protein FMG_0209 (Finegoldia magna (strain ATCC 29328 / DSM 20472 / WAL 2508) (Peptostreptococcus magnus)).